A 149-amino-acid chain; its full sequence is Calmodulin (149 aa).

Alanine 2 carries the post-translational modification N-acetylalanine. 4 consecutive EF-hand domains span residues 8–43 (EQIA…LGQN), 44–79 (PTEA…KMKD), 81–116 (DSEE…LGEK), and 117–149 (LTDE…MMSK). Aspartate 21, aspartate 23, aspartate 25, threonine 27, glutamate 32, aspartate 57, aspartate 59, asparagine 61, threonine 63, glutamate 68, aspartate 94, aspartate 96, asparagine 98, and glutamate 105 together coordinate Ca(2+). Lysine 116 carries the N6,N6,N6-trimethyllysine modification. Ca(2+) contacts are provided by aspartate 130, aspartate 132, aspartate 134, glutamine 136, and glutamate 141.

It belongs to the calmodulin family.

Calmodulin mediates the control of a large number of enzymes, ion channels and other proteins by Ca(2+). Among the enzymes to be stimulated by the calmodulin-Ca(2+) complex are a number of protein kinases and phosphatases. The chain is Calmodulin from Lumbricus rubellus (Humus earthworm).